A 292-amino-acid polypeptide reads, in one-letter code: 1D-myo-inositol 2-acetamido-2-deoxy-alpha-D-glucopyranoside deacetylase (292 aa).

His-11, Asp-14, and His-146 together coordinate Zn(2+).

It belongs to the MshB deacetylase family. Zn(2+) serves as cofactor.

It carries out the reaction 1D-myo-inositol 2-acetamido-2-deoxy-alpha-D-glucopyranoside + H2O = 1D-myo-inositol 2-amino-2-deoxy-alpha-D-glucopyranoside + acetate. Its function is as follows. Catalyzes the deacetylation of 1D-myo-inositol 2-acetamido-2-deoxy-alpha-D-glucopyranoside (GlcNAc-Ins) in the mycothiol biosynthesis pathway. The protein is 1D-myo-inositol 2-acetamido-2-deoxy-alpha-D-glucopyranoside deacetylase of Acidothermus cellulolyticus (strain ATCC 43068 / DSM 8971 / 11B).